A 549-amino-acid chain; its full sequence is Coiled-coil domain-containing protein 102A (549 aa).

3 disordered regions span residues 1-61 (MSHG…TAPA), 135-195 (LAGA…GSQE), and 207-248 (PEEP…EEDA). Ser-12, Ser-26, and Ser-28 each carry phosphoserine. Pro residues predominate over residues 37 to 55 (SLPPTPPSGTPSPGPPPSL). The stretch at 69–160 (ESREELRLRE…ARGRELARLR (92 aa)) forms a coiled coil. Basic and acidic residues-rich tracts occupy residues 135-158 (LAGARRERQEAQGECEARGRELAR) and 165-187 (AADKTHDGPEPEREQEPVRDIGA). Coiled coils occupy residues 263–398 (KVLL…NASA) and 426–517 (KLKK…NAPL). Disordered stretches follow at residues 472–496 (ELDEAHNQARKLQRSLDEQTEQSEN) and 509–549 (RRQQ…IQVA). Over residues 530–549 (EAGDGASDLDEDEDLQIQVA) the composition is skewed to acidic residues. A Phosphoserine modification is found at Ser-536.

In Mus musculus (Mouse), this protein is Coiled-coil domain-containing protein 102A (Ccdc102a).